We begin with the raw amino-acid sequence, 311 residues long: Bifunctional pinoresinol-lariciresinol reductase (311 aa).

NADP(+) contacts are provided by residues 10–16 (GGTGYLG), Arg35, and Lys44. Lys138 functions as the Proton acceptor in the catalytic mechanism. Arg142 is a binding site for NADP(+). A substrate-binding site is contributed by His270.

Belongs to the NmrA-type oxidoreductase family. Isoflavone reductase subfamily. As to quaternary structure, dimer. Expressed in rhizomes, stems, and leaves.

The enzyme catalyses (-)-secoisolariciresinol + NADP(+) = (+)-lariciresinol + NADPH + H(+). The catalysed reaction is (+)-lariciresinol + NADP(+) = (+)-pinoresinol + NADPH + H(+). Its pathway is aromatic compound metabolism; phenylpropanoid biosynthesis. Reductase involved in lignan biosynthesis. Also involved in the biosynthesis of etoposide, a chemotherapeutic compound of the topoisomerase inhibitor family. Catalyzes the enantioselective sequential conversion of (+)-pinoresinol into (+)-lariciresinol and of (+)-lariciresinol into (-)-secoisolariciresinol. Abstracts the 4R-hydride from the NADPH cofactor during catalysis. This Sinopodophyllum hexandrum (Himalayan may apple) protein is Bifunctional pinoresinol-lariciresinol reductase.